The following is a 417-amino-acid chain: MTHTKSEELFRRAVEKIPGGVNSPVRAFRSVGGQPVFIARGQGSHLFDVDGNEYIDYVGSWGPLILGHRHPEILAALERALEIGTSFGAPTEQEIDLADAIIDAVPSVEMVRLVNSGTEATMSAIRVARGFTGRDLVVKFEGCYHGHVDSLLVKAGSGMATLGIADTQGVPKAFADTTIPLPYNSLDALEEAFRAHGDRIAAVIVEPVVGNMGCVPPLPGYLEGMRAITERYGALLIFDEVMTGFRVAFGGAQQLYGIKPDLTTLGKVIGGGLPVGAYGGRKDIMSKVAPAGPIYQAGTLSGNPLAVAAGLAMLRHLKRNPQVYTRLEECGARLAAAAPKGVTVNRVGSMFTFFFTDGPVTDWESAKRCDTSRFGEFFRGMLDRGVYLAPSQFEAAFVGAAHSDEDIAKTIEAAKTA.

Lysine 267 bears the N6-(pyridoxal phosphate)lysine mark.

This sequence belongs to the class-III pyridoxal-phosphate-dependent aminotransferase family. HemL subfamily. Homodimer. Pyridoxal 5'-phosphate is required as a cofactor.

Its subcellular location is the cytoplasm. The enzyme catalyses (S)-4-amino-5-oxopentanoate = 5-aminolevulinate. It participates in porphyrin-containing compound metabolism; protoporphyrin-IX biosynthesis; 5-aminolevulinate from L-glutamyl-tRNA(Glu): step 2/2. This is Glutamate-1-semialdehyde 2,1-aminomutase from Solibacter usitatus (strain Ellin6076).